The primary structure comprises 226 residues: Triosephosphate isomerase (226 aa).

Residue His91 is the Electrophile of the active site. Glu163 (proton acceptor) is an active-site residue. The substrate site is built by Gly169 and Ser207.

Belongs to the triosephosphate isomerase family. As to quaternary structure, homodimer.

Its subcellular location is the cytoplasm. It catalyses the reaction D-glyceraldehyde 3-phosphate = dihydroxyacetone phosphate. It functions in the pathway carbohydrate biosynthesis; gluconeogenesis. It participates in carbohydrate degradation; glycolysis; D-glyceraldehyde 3-phosphate from glycerone phosphate: step 1/1. Functionally, involved in the gluconeogenesis. Catalyzes stereospecifically the conversion of dihydroxyacetone phosphate (DHAP) to D-glyceraldehyde-3-phosphate (G3P). In Rhizobium etli (strain ATCC 51251 / DSM 11541 / JCM 21823 / NBRC 15573 / CFN 42), this protein is Triosephosphate isomerase.